The chain runs to 202 residues: V-type proton ATPase subunit E (202 aa).

It belongs to the V-ATPase E subunit family.

In terms of biological role, produces ATP from ADP in the presence of a proton gradient across the membrane. This Halothermothrix orenii (strain H 168 / OCM 544 / DSM 9562) protein is V-type proton ATPase subunit E.